The primary structure comprises 214 residues: Putative pyrophosphatase PpaX (214 aa).

Asp8 acts as the Nucleophile in catalysis.

Belongs to the HAD-like hydrolase superfamily. PpaX family. It depends on Mg(2+) as a cofactor.

The catalysed reaction is diphosphate + H2O = 2 phosphate + H(+). This Clostridium perfringens (strain 13 / Type A) protein is Putative pyrophosphatase PpaX.